The chain runs to 111 residues: Aspartate 1-decarboxylase (111 aa).

The Schiff-base intermediate with substrate; via pyruvic acid role is filled by Ser-25. Ser-25 carries the post-translational modification Pyruvic acid (Ser). Thr-57 is a binding site for substrate. Tyr-58 (proton donor) is an active-site residue. A substrate-binding site is contributed by 73–75 (GPA).

The protein belongs to the PanD family. Heterooctamer of four alpha and four beta subunits. It depends on pyruvate as a cofactor. In terms of processing, is synthesized initially as an inactive proenzyme, which is activated by self-cleavage at a specific serine bond to produce a beta-subunit with a hydroxyl group at its C-terminus and an alpha-subunit with a pyruvoyl group at its N-terminus.

It localises to the cytoplasm. The catalysed reaction is L-aspartate + H(+) = beta-alanine + CO2. It participates in cofactor biosynthesis; (R)-pantothenate biosynthesis; beta-alanine from L-aspartate: step 1/1. In terms of biological role, catalyzes the pyruvoyl-dependent decarboxylation of aspartate to produce beta-alanine. The protein is Aspartate 1-decarboxylase of Francisella tularensis subsp. tularensis (strain FSC 198).